Consider the following 223-residue polypeptide: Cytidylate kinase (223 aa).

10–18 lines the ATP pocket; that stretch reads GPAGAGKST.

It belongs to the cytidylate kinase family. Type 1 subfamily.

It is found in the cytoplasm. The catalysed reaction is CMP + ATP = CDP + ADP. It catalyses the reaction dCMP + ATP = dCDP + ADP. In Exiguobacterium sibiricum (strain DSM 17290 / CCUG 55495 / CIP 109462 / JCM 13490 / 255-15), this protein is Cytidylate kinase.